The chain runs to 107 residues: UPF0145 protein PM1668 (107 aa).

The protein belongs to the UPF0145 family.

The sequence is that of UPF0145 protein PM1668 from Pasteurella multocida (strain Pm70).